The chain runs to 300 residues: Ribosomal RNA small subunit methyltransferase H (300 aa).

Residues 46-48 (GGH), Asp-65, Phe-92, Asp-107, and Gln-114 contribute to the S-adenosyl-L-methionine site.

This sequence belongs to the methyltransferase superfamily. RsmH family.

It localises to the cytoplasm. It carries out the reaction cytidine(1402) in 16S rRNA + S-adenosyl-L-methionine = N(4)-methylcytidine(1402) in 16S rRNA + S-adenosyl-L-homocysteine + H(+). Its function is as follows. Specifically methylates the N4 position of cytidine in position 1402 (C1402) of 16S rRNA. The protein is Ribosomal RNA small subunit methyltransferase H of Prochlorococcus marinus (strain AS9601).